Consider the following 1378-residue polypeptide: Bud site selection protein 4 (1378 aa).

Disordered regions lie at residues 71-95, 361-441, and 458-480; these read NNVI…NNDK, KDSP…NSES, and TNKS…LKSS. Residues 361–378 are compositionally biased toward basic and acidic residues; the sequence is KDSPENTLHTNEDQKEAN. Residues 406-415 are compositionally biased toward low complexity; the sequence is STITNITNDT. Positions 420–430 are enriched in basic and acidic residues; sequence EGSKAEEDAKN. A compositionally biased stretch (polar residues) spans 431 to 441; sequence SDVSNSQNSES. Basic and acidic residues predominate over residues 470–480; the sequence is EPPKENELKSS. The region spanning 1240–1357 is the PH domain; sequence LISKEGYLMQ…WYSKLKKTVD (118 aa).

It belongs to the BUD4 family.

It localises to the bud neck. Required for selection of future bud sites. Cooperates with other bud site selection proteins to recognize a spatial landmark during mitosis and they subsequently become a landmark for downstream polarity establishment factors that coordinate budding and cytokinesis. Involved in the septin organization at the bud neck. The sequence is that of Bud site selection protein 4 (BUD4) from Vanderwaltozyma polyspora (strain ATCC 22028 / DSM 70294 / BCRC 21397 / CBS 2163 / NBRC 10782 / NRRL Y-8283 / UCD 57-17) (Kluyveromyces polysporus).